We begin with the raw amino-acid sequence, 469 residues long: UDP-N-acetylmuramate--L-alanine ligase (469 aa).

Residue 118–124 (GTHGKTT) coordinates ATP.

The protein belongs to the MurCDEF family.

It localises to the cytoplasm. The enzyme catalyses UDP-N-acetyl-alpha-D-muramate + L-alanine + ATP = UDP-N-acetyl-alpha-D-muramoyl-L-alanine + ADP + phosphate + H(+). It functions in the pathway cell wall biogenesis; peptidoglycan biosynthesis. Cell wall formation. The protein is UDP-N-acetylmuramate--L-alanine ligase of Ruegeria sp. (strain TM1040) (Silicibacter sp.).